A 560-amino-acid chain; its full sequence is Membrane protein insertase YidC (560 aa).

6 helical membrane passes run 7-27, 334-354, 357-377, 431-451, 476-496, and 522-542; these read NLIA…YFVV, AIDF…MNFF, YVGN…LLMF, LPIL…YVTI, LFGF…WPIL, and FMPL…LIYW.

The protein belongs to the OXA1/ALB3/YidC family. Type 1 subfamily. Interacts with the Sec translocase complex via SecD. Specifically interacts with transmembrane segments of nascent integral membrane proteins during membrane integration.

The protein resides in the cell inner membrane. Its function is as follows. Required for the insertion and/or proper folding and/or complex formation of integral membrane proteins into the membrane. Involved in integration of membrane proteins that insert both dependently and independently of the Sec translocase complex, as well as at least some lipoproteins. Aids folding of multispanning membrane proteins. The protein is Membrane protein insertase YidC of Rickettsia canadensis (strain McKiel).